Reading from the N-terminus, the 309-residue chain is Vomeronasal type-1 receptor 46 (309 aa).

Over 1-20 the chain is Extracellular; the sequence is MNKANIFCTDTNMKVILFSE. A helical membrane pass occupies residues 21 to 41; that stretch reads VSVGISANSILFISHLCMFLG. Residues 42–50 are Cytoplasmic-facing; the sequence is ESRPKPIDL. The chain crosses the membrane as a helical span at residues 51 to 71; the sequence is YIAFFSLTHLMLLVTMGLIAV. Topologically, residues 72 to 85 are extracellular; the sequence is DMFMPGGRWDSTTC. Cysteine 85 and cysteine 171 form a disulfide bridge. Residues 86–106 traverse the membrane as a helical segment; that stretch reads TFLMYLHIVLRGPTLCATCLL. The Cytoplasmic segment spans residues 107–134; sequence NVLWTITLSPRNSCLTKFKHKSPHHISG. Residues 135-155 traverse the membrane as a helical segment; sequence AFLFLCVLYMSLSSELLSITA. At 156–192 the chain is on the extracellular side; sequence SLNLTSENFLYVSQSCSILPMSYSIKSMFSTKMAIRE. An N-linked (GlcNAc...) asparagine glycan is attached at asparagine 158. Residues 193-213 form a helical membrane-spanning segment; that stretch reads AFLIGLMVLSSGYMVALLWSH. The Cytoplasmic segment spans residues 214 to 237; that stretch reads KKQAQHLHSNSLSLKASPEQRATR. The helical transmembrane segment at 238–258 threads the bilayer; that stretch reads TIMLLMSFFVVFYILDSVIFY. Over 259 to 267 the chain is Extracellular; it reads SRMKFKDDS. The chain crosses the membrane as a helical span at residues 268–288; it reads IFVCVQIIVSHSYVTVSPFVF. Residues 289-309 lie on the Cytoplasmic side of the membrane; that stretch reads ICTEKHIIKFFWSLCGRIVNI.

Belongs to the G-protein coupled receptor 1 family.

Its subcellular location is the cell membrane. Functionally, putative pheromone receptor implicated in the regulation of social and reproductive behavior. The polypeptide is Vomeronasal type-1 receptor 46 (Vmn1r46) (Mus musculus (Mouse)).